Here is a 201-residue protein sequence, read N- to C-terminus: Small ribosomal subunit protein uS5 (201 aa).

A disordered region spans residues 1–27 (MAGPQRRGSGAGGGERRDRKGRDGGAA). Over residues 14 to 23 (GERRDRKGRD) the composition is skewed to basic and acidic residues. Residues 34 to 97 (YVERVVAINR…EEAKKHFFKV (64 aa)) enclose the S5 DRBM domain.

It belongs to the universal ribosomal protein uS5 family. As to quaternary structure, part of the 30S ribosomal subunit. Contacts proteins S4 and S8.

In terms of biological role, with S4 and S12 plays an important role in translational accuracy. Its function is as follows. Located at the back of the 30S subunit body where it stabilizes the conformation of the head with respect to the body. The sequence is that of Small ribosomal subunit protein uS5 from Streptomyces avermitilis (strain ATCC 31267 / DSM 46492 / JCM 5070 / NBRC 14893 / NCIMB 12804 / NRRL 8165 / MA-4680).